Reading from the N-terminus, the 603-residue chain is Dual specificity protein phosphatase CDC14A (603 aa).

Residues 7-162 (ELIGACEFMK…GLQHGFFDFE (156 aa)) form an a region. Residues 163 to 176 (TFDAEEYEHYERVE) are linker. A b region spans residues 177-343 (NGDFNWIVPG…QGDIFRSKLK (167 aa)). The region spanning 179–336 (DFNWIVPGKF…KQASLWVQGD (158 aa)) is the Tyrosine-protein phosphatase domain. Residue Cys-278 is the Phosphocysteine intermediate of the active site. A Phosphoserine modification is found at Ser-484. Over residues 518-538 (NGSTQTPGRNYPELNNNQYTR) the composition is skewed to polar residues. The disordered stretch occupies residues 518–583 (NGSTQTPGRN…RPSFPGSLSS (66 aa)). Composition is skewed to low complexity over residues 539–558 (SSNS…LNSS) and 573–583 (LRPSFPGSLSS). Ser-592 carries the phosphoserine modification.

This sequence belongs to the protein-tyrosine phosphatase family. Non-receptor class CDC14 subfamily. As to quaternary structure, interacts with KIF20A. Interaction is required to localize CDC14 to the midzone of the mitotic spindle. As to expression, expressed in the inner ear.

Its subcellular location is the nucleus. It is found in the cytoplasm. The protein localises to the cytoskeleton. The protein resides in the microtubule organizing center. It localises to the centrosome. Its subcellular location is the spindle. It is found in the cell projection. The protein localises to the kinocilium. The protein resides in the spindle pole. It localises to the stereocilium. It catalyses the reaction O-phospho-L-tyrosyl-[protein] + H2O = L-tyrosyl-[protein] + phosphate. It carries out the reaction O-phospho-L-seryl-[protein] + H2O = L-seryl-[protein] + phosphate. The enzyme catalyses O-phospho-L-threonyl-[protein] + H2O = L-threonyl-[protein] + phosphate. Functionally, dual-specificity phosphatase. Required for centrosome separation and productive cytokinesis during cell division. Dephosphorylates SIRT2 around early anaphase. May dephosphorylate the APC subunit FZR1/CDH1, thereby promoting APC-FZR1 dependent degradation of mitotic cyclins and subsequent exit from mitosis. Required for normal hearing. The chain is Dual specificity protein phosphatase CDC14A (Cdc14a) from Mus musculus (Mouse).